Here is a 678-residue protein sequence, read N- to C-terminus: MTPNEFFSIKYHILAKAELKAYIDKLADYLSQQSYLYHTLDKPIISDSDYDKLFRLLQDLVNDNPQFKPINSVLDRVGGEVLAEFETIKHKKKMTSLANVFSLEELRDFYDKIEYDIELECEPKMDGLAISIFYKNGKFDYAVTRGDGIQGEKVSENVKTIRNVPLKLNTSNPPEELEVRGEIILDKQSFLSLNEYMQTHENKTFANPRNAAAGSIRMLDSKVVAKRPLKLYSYGIGYFSKDFVHPETQFELMQLLQSFGFTISDNMFLAKNFSEVEEYHHKMSHQRADLAYDIDGLVFKVNNIKLQDIIGYTARGPKWAVAYKFPAEEVESEVLNVEFQVGRTGAITPVARLKPVAVGGVIVSNATLHNINEIKRKDIRVGDRVIVRRAGDVIPEVVKSLPQYRKSDAQMVEMPTNCPVCDSAIENVNDQAIYRCTGGWHCQAQTTERLKHFVSRKAMDIDKLGAKLIEQLVAANLIKYPADIYKLNFDQLTGLERMGAKSSQNVLDSIKKSKTPSLARFIFAIGIKDIGEVSSDVLANHFGSLESFRDAKFEELIEINDIGEIMANNIVSFWHDSLNIKIVEELLAIGIKIQNPVKVEHAYNESFTGKTVVITGSFENYGRTELTQLLKSIGAKVTSSVSKKTDMVICGDNAGSKLTKAQELGVEVILEDNLKDLL.

NAD(+)-binding positions include 47 to 51 (DSDYD), 96 to 97 (SL), and Glu-122. Residue Lys-124 is the N6-AMP-lysine intermediate of the active site. Residues Arg-145, Glu-182, Lys-300, and Lys-324 each contribute to the NAD(+) site. Cys-418, Cys-421, Cys-436, and Cys-442 together coordinate Zn(2+). Positions 602–678 (AYNESFTGKT…ILEDNLKDLL (77 aa)) constitute a BRCT domain.

It belongs to the NAD-dependent DNA ligase family. LigA subfamily. Mg(2+) is required as a cofactor. Mn(2+) serves as cofactor.

The catalysed reaction is NAD(+) + (deoxyribonucleotide)n-3'-hydroxyl + 5'-phospho-(deoxyribonucleotide)m = (deoxyribonucleotide)n+m + AMP + beta-nicotinamide D-nucleotide.. Functionally, DNA ligase that catalyzes the formation of phosphodiester linkages between 5'-phosphoryl and 3'-hydroxyl groups in double-stranded DNA using NAD as a coenzyme and as the energy source for the reaction. It is essential for DNA replication and repair of damaged DNA. This is DNA ligase from Francisella tularensis subsp. novicida (strain U112).